Here is a 303-residue protein sequence, read N- to C-terminus: 4-diphosphocytidyl-2-C-methyl-D-erythritol kinase (303 aa).

Residue K18 is part of the active site. Residue 111–121 (PVASGIGGGSA) coordinates ATP. Residue D153 is part of the active site.

Belongs to the GHMP kinase family. IspE subfamily.

The catalysed reaction is 4-CDP-2-C-methyl-D-erythritol + ATP = 4-CDP-2-C-methyl-D-erythritol 2-phosphate + ADP + H(+). It participates in isoprenoid biosynthesis; isopentenyl diphosphate biosynthesis via DXP pathway; isopentenyl diphosphate from 1-deoxy-D-xylulose 5-phosphate: step 3/6. Catalyzes the phosphorylation of the position 2 hydroxy group of 4-diphosphocytidyl-2C-methyl-D-erythritol. In Sinorhizobium medicae (strain WSM419) (Ensifer medicae), this protein is 4-diphosphocytidyl-2-C-methyl-D-erythritol kinase.